Here is a 102-residue protein sequence, read N- to C-terminus: Acid shock protein (102 aa).

The N-terminal stretch at Met-1–Ala-21 is a signal peptide. The propeptide occupies Ala-22–Gln-58. Over residues Ile-26 to Lys-41 the composition is skewed to low complexity. The tract at residues Ile-26 to Ala-102 is disordered. Residues Ala-80 to His-90 are compositionally biased toward basic residues. Residues Gln-91–Ala-102 are compositionally biased toward low complexity.

This sequence belongs to the Asr family. Post-translationally, proteolytic processing gives rise to the active protein.

It is found in the periplasm. Its function is as follows. Required for growth and/or survival at acidic conditions. The chain is Acid shock protein from Escherichia coli O81 (strain ED1a).